The following is a 573-amino-acid chain: Threonine--tRNA ligase (573 aa).

The tract at residues 174-474 is catalytic; it reads DHRRINKILE…LLEQTKGALD (301 aa). The Zn(2+) site is built by Cys-268, His-319, and His-451.

This sequence belongs to the class-II aminoacyl-tRNA synthetase family. Homodimer. Requires Zn(2+) as cofactor.

It is found in the cytoplasm. The catalysed reaction is tRNA(Thr) + L-threonine + ATP = L-threonyl-tRNA(Thr) + AMP + diphosphate + H(+). Catalyzes the attachment of threonine to tRNA(Thr) in a two-step reaction: L-threonine is first activated by ATP to form Thr-AMP and then transferred to the acceptor end of tRNA(Thr). Also edits incorrectly charged L-seryl-tRNA(Thr). The chain is Threonine--tRNA ligase from Mycoplasmoides gallisepticum (strain R(low / passage 15 / clone 2)) (Mycoplasma gallisepticum).